A 146-amino-acid chain; its full sequence is General odorant-binding protein 19a (146 aa).

Positions 1-22 are cleaved as a signal peptide; that stretch reads MKFHLLLVCVAISLGPIPQSEA. 3 disulfide bridges follow: cysteine 40–cysteine 72, cysteine 68–cysteine 126, and cysteine 113–cysteine 135.

The protein belongs to the PBP/GOBP family. In terms of tissue distribution, expressed in adult olfactory system. Expressed exclusively in a subset of chemosensory sensilla on the third antennal segment.

It localises to the secreted. In terms of biological role, present in the aqueous fluid surrounding olfactory sensory dendrites and are thought to aid in the capture and transport of hydrophobic odorants into and through this fluid. In Drosophila melanogaster (Fruit fly), this protein is General odorant-binding protein 19a (Obp19a).